A 347-amino-acid chain; its full sequence is GMP reductase (347 aa).

108–131 (ADFEKTKQILDLNSALNFVCIDVA) is an NADP(+) binding site. K(+)-binding residues include glycine 181 and glycine 183. The Thioimidate intermediate role is filled by cysteine 186. 216 to 239 (IVSDGGCTTPGDVAKAFGGGADFV) lines the NADP(+) pocket.

It belongs to the IMPDH/GMPR family. GuaC type 1 subfamily. Homotetramer.

The catalysed reaction is IMP + NH4(+) + NADP(+) = GMP + NADPH + 2 H(+). Catalyzes the irreversible NADPH-dependent deamination of GMP to IMP. It functions in the conversion of nucleobase, nucleoside and nucleotide derivatives of G to A nucleotides, and in maintaining the intracellular balance of A and G nucleotides. The protein is GMP reductase of Escherichia coli O81 (strain ED1a).